The following is a 310-amino-acid chain: Methionyl-tRNA formyltransferase (310 aa).

110 to 113 (SLLP) provides a ligand contact to (6S)-5,6,7,8-tetrahydrofolate.

It belongs to the Fmt family.

It carries out the reaction L-methionyl-tRNA(fMet) + (6R)-10-formyltetrahydrofolate = N-formyl-L-methionyl-tRNA(fMet) + (6S)-5,6,7,8-tetrahydrofolate + H(+). Functionally, attaches a formyl group to the free amino group of methionyl-tRNA(fMet). The formyl group appears to play a dual role in the initiator identity of N-formylmethionyl-tRNA by promoting its recognition by IF2 and preventing the misappropriation of this tRNA by the elongation apparatus. The sequence is that of Methionyl-tRNA formyltransferase from Clostridium acetobutylicum (strain ATCC 824 / DSM 792 / JCM 1419 / IAM 19013 / LMG 5710 / NBRC 13948 / NRRL B-527 / VKM B-1787 / 2291 / W).